Reading from the N-terminus, the 236-residue chain is MSYNFTDPYEIARFIKEVKKSTPVKVYLKGNLEGVELGSIECYGNNDFYVLFGESDEVATFLTENKDKIVSFRLENDRRNSAIPMLDLLNINARIEPGAIIRDRVSIGDNAVIMMGAVINIGAEIGESTMVDMNAVIGARGKLGKRVHLGAGAVVAGVLEPPSKTPCIIEDDVLIGANAVILEGVKIGKGSVVAAGSVVVEDVPAGVVVAGTPAKIIKSVDEKTKDKTEILDDLRK.

The protein belongs to the transferase hexapeptide repeat family. DapH subfamily.

The catalysed reaction is (S)-2,3,4,5-tetrahydrodipicolinate + acetyl-CoA + H2O = L-2-acetamido-6-oxoheptanedioate + CoA. It functions in the pathway amino-acid biosynthesis; L-lysine biosynthesis via DAP pathway; LL-2,6-diaminopimelate from (S)-tetrahydrodipicolinate (acetylase route): step 1/3. In terms of biological role, catalyzes the transfer of an acetyl group from acetyl-CoA to tetrahydrodipicolinate. In Clostridium perfringens (strain ATCC 13124 / DSM 756 / JCM 1290 / NCIMB 6125 / NCTC 8237 / Type A), this protein is 2,3,4,5-tetrahydropyridine-2,6-dicarboxylate N-acetyltransferase.